Reading from the N-terminus, the 200-residue chain is ATP-dependent Clp protease proteolytic subunit (200 aa).

The active-site Nucleophile is Ser-101. Residue His-126 is part of the active site.

It belongs to the peptidase S14 family. As to quaternary structure, component of the chloroplastic Clp protease core complex.

Its subcellular location is the plastid. It localises to the chloroplast stroma. It catalyses the reaction Hydrolysis of proteins to small peptides in the presence of ATP and magnesium. alpha-casein is the usual test substrate. In the absence of ATP, only oligopeptides shorter than five residues are hydrolyzed (such as succinyl-Leu-Tyr-|-NHMec, and Leu-Tyr-Leu-|-Tyr-Trp, in which cleavage of the -Tyr-|-Leu- and -Tyr-|-Trp bonds also occurs).. Functionally, cleaves peptides in various proteins in a process that requires ATP hydrolysis. Has a chymotrypsin-like activity. Plays a major role in the degradation of misfolded proteins. The polypeptide is ATP-dependent Clp protease proteolytic subunit (Adiantum capillus-veneris (Maidenhair fern)).